The sequence spans 192 residues: Erythropoietin (192 aa).

An N-terminal signal peptide occupies residues 1-27 (MGVHECPAWLWLLLSLVSLPLGLPVPG). 2 cysteine pairs are disulfide-bonded: cysteine 34–cysteine 187 and cysteine 56–cysteine 60. The N-linked (GlcNAc...) asparagine glycan is linked to asparagine 51. N-linked (GlcNAc...) asparagine glycans are attached at residues asparagine 65 and asparagine 110. O-linked (GalNAc...) serine glycosylation is present at serine 152.

This sequence belongs to the EPO/TPO family. As to expression, produced by kidney or liver of adult mammals and by liver of fetal or neonatal mammals.

It localises to the secreted. In terms of biological role, hormone involved in the regulation of erythrocyte proliferation and differentiation and the maintenance of a physiological level of circulating erythrocyte mass. Binds to EPOR leading to EPOR dimerization and JAK2 activation thereby activating specific downstream effectors, including STAT1 and STAT3. The polypeptide is Erythropoietin (EPO) (Macaca mulatta (Rhesus macaque)).